The following is a 35-amino-acid chain: MEALVYTFLLVSTLGIIFFAIFFRDPPKVPNEGRK.

A helical transmembrane segment spans residues Ala3–Phe23.

This sequence belongs to the PsbT family. PSII is composed of 1 copy each of membrane proteins PsbA, PsbB, PsbC, PsbD, PsbE, PsbF, PsbH, PsbI, PsbJ, PsbK, PsbL, PsbM, PsbT, PsbY, PsbZ, Psb30/Ycf12, at least 3 peripheral proteins of the oxygen-evolving complex and a large number of cofactors. It forms dimeric complexes.

The protein localises to the plastid. Its subcellular location is the chloroplast thylakoid membrane. Its function is as follows. Found at the monomer-monomer interface of the photosystem II (PS II) dimer, plays a role in assembly and dimerization of PSII. PSII is a light-driven water plastoquinone oxidoreductase, using light energy to abstract electrons from H(2)O, generating a proton gradient subsequently used for ATP formation. The protein is Photosystem II reaction center protein T of Ginkgo biloba (Ginkgo).